A 198-amino-acid chain; its full sequence is MTNIPEIPYKAVVNIENIVATVTLDQNLDLYAMERSVPNVEYDPDQFPGLIFRLEAPKVTSLIFKSGKMVVTGAKSTDELIKAVKRIIKTLKRYGMNLTGKPKIQIQNIVASANLHVIVNLDKAAFLLENNMYEPEQFPGLIYRMEDPRVVLLIFSSGKMVITGAKREEEVHKAVKKIFDKLVELDCVKPFEEEELEF.

Repeat copies occupy residues 15-91 and 106-182.

The protein belongs to the TBP family.

In terms of biological role, general factor that plays a role in the activation of archaeal genes transcribed by RNA polymerase. Binds specifically to the TATA box promoter element which lies close to the position of transcription initiation. The sequence is that of TATA-box-binding protein (tbp) from Sulfurisphaera tokodaii (strain DSM 16993 / JCM 10545 / NBRC 100140 / 7) (Sulfolobus tokodaii).